We begin with the raw amino-acid sequence, 412 residues long: BSD domain-containing protein 1 (412 aa).

A BSD domain is found at 146 to 198 (WLAYWDPEHRKAEISELLVTSPSIRALYTKMVPAAVSHSEFWQRYFYKVHQLE). 2 stretches are compositionally biased toward basic and acidic residues: residues 208–219 (KQRADQSVHSEE) and 255–271 (HVED…RDHT). Disordered stretches follow at residues 208 to 228 (KQRA…EEED) and 255 to 383 (HVED…EKDF). Residues 272 to 287 (SITSPSESSESISPIT) are compositionally biased toward low complexity. Basic and acidic residues predominate over residues 340-351 (THREDPPSDLRV). A compositionally biased stretch (polar residues) spans 355–374 (NSDSGKSTPSNNGQKGSSTD).

The protein is BSD domain-containing protein 1 (bsdc1) of Xenopus tropicalis (Western clawed frog).